We begin with the raw amino-acid sequence, 351 residues long: UDP-3-O-acylglucosamine N-acyltransferase (351 aa).

Catalysis depends on H240, which acts as the Proton acceptor.

This sequence belongs to the transferase hexapeptide repeat family. LpxD subfamily. As to quaternary structure, homotrimer.

It carries out the reaction a UDP-3-O-[(3R)-3-hydroxyacyl]-alpha-D-glucosamine + a (3R)-hydroxyacyl-[ACP] = a UDP-2-N,3-O-bis[(3R)-3-hydroxyacyl]-alpha-D-glucosamine + holo-[ACP] + H(+). The protein operates within bacterial outer membrane biogenesis; LPS lipid A biosynthesis. Catalyzes the N-acylation of UDP-3-O-acylglucosamine using 3-hydroxyacyl-ACP as the acyl donor. Is involved in the biosynthesis of lipid A, a phosphorylated glycolipid that anchors the lipopolysaccharide to the outer membrane of the cell. The protein is UDP-3-O-acylglucosamine N-acyltransferase of Pseudomonas putida (strain ATCC 47054 / DSM 6125 / CFBP 8728 / NCIMB 11950 / KT2440).